The following is a 662-amino-acid chain: Protein associated with UVRAG as autophagy enhancer (662 aa).

2 disordered regions span residues 1-34 (MVSQ…RLLN) and 58-131 (DVQQ…SLSS). Residues 58-71 (DVQQQPQDLQSQVP) are compositionally biased toward low complexity. Residues 100 to 113 (AETTLSEDTTDSVG) show a composition bias toward polar residues. The span at 114-131 (SASPHGSSEKSSSFSLSS) shows a compositional bias: low complexity. Ser-157 bears the Phosphoserine; by MTOR mark. Positions 196–235 (EVFVLPVDVEKENAHFYVADMIISAMEKMKCNILSQQQTE) are interaction with UVRAG. N6-acetyllysine occurs at positions 483, 523, 533, 573, and 633.

In terms of assembly, interacts with UVRAG; the interaction is direct and promotes association with the PI3K/PI3KC3 and HOPS complexes. Interacts with STX17. In terms of processing, phosphorylated by MTOR at Ser-157 under nutrient-rich conditions. Phosphorylation prevents acetylation by KAT5/TIP60 and impairs RUBCNL/PACER function and autophagosome maturation. Under autophagy induction, Phosphorylation by MTOR is repressed, enabling acetylation by KAT5/TIP60. Acetylated by KAT5/TIP60 under autophagy induction, promoting autophagosome maturation and lipid metabolism. Acetylation is prevented by phosphorylation by MTOR. Lys-483 and Lys-573 constitute the key sites for tuning function in autophagy. Expressed weakly in cervical carcinoma cell lines.

The protein localises to the cytoplasmic vesicle. It is found in the autophagosome membrane. Regulator of autophagy that promotes autophagosome maturation by facilitating the biogenesis of phosphatidylinositol 3-phosphate (PtdIns(3)P) in late steps of autophagy. Acts by antagonizing RUBCN, thereby stimulating phosphatidylinositol 3-kinase activity of the PI3K/PI3KC3 complex. Following anchorage to the autophagosomal SNARE STX17, promotes the recruitment of PI3K/PI3KC3 and HOPS complexes to the autophagosome to regulate the fusion specificity of autophagosomes with late endosomes/lysosomes. Binds phosphoinositides phosphatidylinositol 3-phosphate (PtdIns(3)P), 4-phosphate (PtdIns(4)P) and 5-phosphate (PtdIns(5)P). In addition to its role in autophagy, acts as a regulator of lipid and glycogen homeostasis. May act as a tumor suppressor. This chain is Protein associated with UVRAG as autophagy enhancer, found in Homo sapiens (Human).